The primary structure comprises 269 residues: Auxin-responsive protein IAA26 (269 aa).

Basic and acidic residues predominate over residues 25–40; that stretch reads YQEDKNNTDQEKKLEL. Disordered stretches follow at residues 25–55 and 76–146; these read YQED…HSAI and CFNG…KQVE. The EAR-like (transcriptional repression) motif lies at 38–42; it reads LELRL. 2 stretches are compositionally biased toward polar residues: residues 80–93 and 117–136; these read NHFS…SVPH and LAST…GQIN. Residues 137-146 are compositionally biased toward basic and acidic residues; the sequence is KSDDGEKQVE. A PB1 domain is found at 151–250; that stretch reads GMFVKINMDG…SVKRLRVIKS (100 aa).

The protein belongs to the Aux/IAA family. As to quaternary structure, homodimers and heterodimers. Interacts with phytochrome A. Interacts with TPL.

The protein localises to the nucleus. Aux/IAA proteins are short-lived transcriptional factors that function as repressors of early auxin response genes at low auxin concentrations. Repression is thought to result from the interaction with auxin response factors (ARFs), proteins that bind to the auxin-responsive promoter element (AuxRE). Formation of heterodimers with ARF proteins may alter their ability to modulate early auxin response genes expression. The polypeptide is Auxin-responsive protein IAA26 (IAA26) (Arabidopsis thaliana (Mouse-ear cress)).